Consider the following 84-residue polypeptide: U8-theraphotoxin-Hhn1c 3 (84 aa).

The first 21 residues, 1–21, serve as a signal peptide directing secretion; the sequence is MKVALIVCLVWVMAMMELVSC. 5 disulfides stabilise this stretch: Cys-23/Cys-35, Cys-29/Cys-44, Cys-34/Cys-67, Cys-54/Cys-75, and Cys-69/Cys-81.

It belongs to the AVIT (prokineticin) family. In terms of tissue distribution, expressed by the venom gland.

It localises to the secreted. The protein is U8-theraphotoxin-Hhn1c 3 of Cyriopagopus hainanus (Chinese bird spider).